We begin with the raw amino-acid sequence, 115 residues long: NADH-ubiquinone oxidoreductase chain 3 (115 aa).

The next 3 helical transmembrane spans lie at 3–23 (IMIT…IAFW), 55–75 (FFLV…LLPL), and 87–107 (MLTT…YEWL).

Belongs to the complex I subunit 3 family. In terms of assembly, core subunit of respiratory chain NADH dehydrogenase (Complex I) which is composed of 45 different subunits. Interacts with TMEM186. Interacts with TMEM242.

Its subcellular location is the mitochondrion inner membrane. The catalysed reaction is a ubiquinone + NADH + 5 H(+)(in) = a ubiquinol + NAD(+) + 4 H(+)(out). Its function is as follows. Core subunit of the mitochondrial membrane respiratory chain NADH dehydrogenase (Complex I) which catalyzes electron transfer from NADH through the respiratory chain, using ubiquinone as an electron acceptor. Essential for the catalytic activity of complex I. In Dasypus novemcinctus (Nine-banded armadillo), this protein is NADH-ubiquinone oxidoreductase chain 3.